A 287-amino-acid chain; its full sequence is Phosphatidylglycerol--prolipoprotein diacylglyceryl transferase (287 aa).

The next 4 membrane-spanning stretches (helical) occupy residues 15 to 35 (IGPL…ILAI), 55 to 75 (FVMF…VFFE), 90 to 110 (IWEG…TAIV), and 117 to 137 (VSFW…QAIG). Arg-138 is a binding site for a 1,2-diacyl-sn-glycero-3-phospho-(1'-sn-glycerol). 2 helical membrane passes run 180–200 (HPTF…LLLL) and 238–258 (IIRT…IFII).

This sequence belongs to the Lgt family.

The protein resides in the cell membrane. The enzyme catalyses L-cysteinyl-[prolipoprotein] + a 1,2-diacyl-sn-glycero-3-phospho-(1'-sn-glycerol) = an S-1,2-diacyl-sn-glyceryl-L-cysteinyl-[prolipoprotein] + sn-glycerol 1-phosphate + H(+). It participates in protein modification; lipoprotein biosynthesis (diacylglyceryl transfer). Functionally, catalyzes the transfer of the diacylglyceryl group from phosphatidylglycerol to the sulfhydryl group of the N-terminal cysteine of a prolipoprotein, the first step in the formation of mature lipoproteins. This chain is Phosphatidylglycerol--prolipoprotein diacylglyceryl transferase, found in Oceanobacillus iheyensis (strain DSM 14371 / CIP 107618 / JCM 11309 / KCTC 3954 / HTE831).